A 120-amino-acid polypeptide reads, in one-letter code: HTH-type transcriptional regulator MerD (120 aa).

In terms of domain architecture, HTH merR-type spans 3–72; the sequence is AYTVSQLAHN…LDALARLCRA (70 aa). A DNA-binding region (H-T-H motif) is located at residues 6–25; the sequence is VSQLAHNAGVSVHIVRDYLV.

This Shigella flexneri protein is HTH-type transcriptional regulator MerD (merD).